The primary structure comprises 94 residues: Protein RnfH (94 aa).

Belongs to the UPF0125 (RnfH) family.

This is Protein RnfH from Yersinia pestis bv. Antiqua (strain Antiqua).